An 877-amino-acid chain; its full sequence is Alanine--tRNA ligase (877 aa).

Positions 564, 568, 666, and 670 each coordinate Zn(2+).

The protein belongs to the class-II aminoacyl-tRNA synthetase family. Zn(2+) is required as a cofactor.

The protein resides in the cytoplasm. The enzyme catalyses tRNA(Ala) + L-alanine + ATP = L-alanyl-tRNA(Ala) + AMP + diphosphate. Its function is as follows. Catalyzes the attachment of alanine to tRNA(Ala) in a two-step reaction: alanine is first activated by ATP to form Ala-AMP and then transferred to the acceptor end of tRNA(Ala). Also edits incorrectly charged Ser-tRNA(Ala) and Gly-tRNA(Ala) via its editing domain. This Pelotomaculum thermopropionicum (strain DSM 13744 / JCM 10971 / SI) protein is Alanine--tRNA ligase.